The following is an 81-amino-acid chain: Photosystem I iron-sulfur center (81 aa).

4Fe-4S ferredoxin-type domains are found at residues 1-31 (MSHK…MVPW) and 39-68 (IASS…IRVY). [4Fe-4S] cluster contacts are provided by Cys-11, Cys-14, Cys-17, Cys-21, Cys-48, Cys-51, Cys-54, and Cys-58.

In terms of assembly, the cyanobacterial PSI reaction center is composed of one copy each of PsaA,B,C,D,E,F,I,J,K,L,M and X, and forms trimeric complexes. Requires [4Fe-4S] cluster as cofactor.

It localises to the cellular thylakoid membrane. It catalyses the reaction reduced [plastocyanin] + hnu + oxidized [2Fe-2S]-[ferredoxin] = oxidized [plastocyanin] + reduced [2Fe-2S]-[ferredoxin]. Apoprotein for the two 4Fe-4S centers FA and FB of photosystem I (PSI); essential for photochemical activity. FB is the terminal electron acceptor of PSI, donating electrons to ferredoxin. The C-terminus interacts with PsaA/B/D and helps assemble the protein into the PSI complex. Required for binding of PsaD and PsaE to PSI. PSI is a plastocyanin/cytochrome c6-ferredoxin oxidoreductase, converting photonic excitation into a charge separation, which transfers an electron from the donor P700 chlorophyll pair to the spectroscopically characterized acceptors A0, A1, FX, FA and FB in turn. This is Photosystem I iron-sulfur center from Crocosphaera subtropica (strain ATCC 51142 / BH68) (Cyanothece sp. (strain ATCC 51142)).